The following is a 450-amino-acid chain: Tripartite motif-containing protein 77 (450 aa).

The segment at 15–56 (CSICTDYLTDPVTICCGHRFCSPCLCLLWEDTLTPNCCPVCR) adopts an RING-type zinc-finger fold. The B box-type zinc finger occupies 88 to 131 (SAMLICRRHQEIKNLICETDRSLLCFLCSQSPRHATHKHYMTRE). Zn(2+)-binding residues include C93, H96, C115, and H121. Residues 269–450 (QLSAWTITGV…LRPFICHGSK (182 aa)) form the B30.2/SPRY domain.

The protein belongs to the TRIM/RBCC family.

In Homo sapiens (Human), this protein is Tripartite motif-containing protein 77 (TRIM77).